The sequence spans 255 residues: Cytochrome c oxidase subunit 2 (255 aa).

Over 1–42 (MKFFFFSFINYKVLNDAARPWQIGFQDPATPIMEGIVNLHHD) the chain is Mitochondrial intermembrane. The chain crosses the membrane as a helical span at residues 43 to 63 (IIFFLIIIIIFVSWILFRTLF). At 64–83 (LFNSKTNPVAYNFSHGTFIE) the chain is on the mitochondrial matrix side. Residues 84-104 (LLWTLTPSLVLIGIAVPSFAL) traverse the membrane as a helical segment. Residues 105–255 (LYSIDEIIDP…IRWVQNKILD (151 aa)) lie on the Mitochondrial intermembrane side of the membrane. The Cu cation site is built by H187, C222, E224, C226, H230, and M233. Residue E224 participates in Mg(2+) binding.

Belongs to the cytochrome c oxidase subunit 2 family. Component of the cytochrome c oxidase (complex IV, CIV), a multisubunit enzyme composed of a catalytic core of 3 subunits and several supernumerary subunits. The complex exists as a monomer or a dimer and forms supercomplexes (SCs) in the inner mitochondrial membrane with ubiquinol-cytochrome c oxidoreductase (cytochrome b-c1 complex, complex III, CIII). Requires Cu cation as cofactor.

It is found in the mitochondrion inner membrane. It carries out the reaction 4 Fe(II)-[cytochrome c] + O2 + 8 H(+)(in) = 4 Fe(III)-[cytochrome c] + 2 H2O + 4 H(+)(out). Functionally, component of the cytochrome c oxidase, the last enzyme in the mitochondrial electron transport chain which drives oxidative phosphorylation. The respiratory chain contains 3 multisubunit complexes succinate dehydrogenase (complex II, CII), ubiquinol-cytochrome c oxidoreductase (cytochrome b-c1 complex, complex III, CIII) and cytochrome c oxidase (complex IV, CIV), that cooperate to transfer electrons derived from NADH and succinate to molecular oxygen, creating an electrochemical gradient over the inner membrane that drives transmembrane transport and the ATP synthase. Cytochrome c oxidase is the component of the respiratory chain that catalyzes the reduction of oxygen to water. Electrons originating from reduced cytochrome c in the intermembrane space (IMS) are transferred via the dinuclear copper A center (CU(A)) of subunit 2 and heme A of subunit 1 to the active site in subunit 1, a binuclear center (BNC) formed by heme A3 and copper B (CU(B)). The BNC reduces molecular oxygen to 2 water molecules using 4 electrons from cytochrome c in the IMS and 4 protons from the mitochondrial matrix. The polypeptide is Cytochrome c oxidase subunit 2 (COX2) (Cyanidium caldarium (Red alga)).